Consider the following 657-residue polypeptide: Conserved oligomeric Golgi complex subunit 6 (657 aa).

The protein belongs to the COG6 family. Component of the conserved oligomeric Golgi complex which is composed of eight different subunits and is required for normal Golgi morphology and localization.

It is found in the golgi apparatus membrane. Required for normal Golgi function. The polypeptide is Conserved oligomeric Golgi complex subunit 6 (COG6) (Homo sapiens (Human)).